The following is a 911-amino-acid chain: Gag-Pro polyprotein (911 aa).

Residues 101 to 161 (AAVAQTEEIL…TKKPKRFPVL (61 aa)) constitute a propeptide that is removed on maturation. Polar residues-rich tracts occupy residues 113 to 125 (NSQTDLTKTSQNP) and 140 to 152 (KSSSLQDKGLSST). A disordered region spans residues 113–178 (NSQTDLTKTS…DPEDPNPSEV (66 aa)). A PPXY motif motif is present at residues 202 to 205 (PPPY). The PTAP/PSAP motif signature appears at 210 to 213 (PSAP). Positions 216 to 257 (MAVVNPKEELKEKIAQLEEQIKLEELHQALISKLQKLKTGNE) form a coiled coil. The segment at 260–279 (THPDTAGGLSRTPHWPGQHI) is disordered. 2 CCHC-type zinc fingers span residues 547 to 564 (GCCFKCGKKGHFAKNCHE) and 576 to 593 (GLCPRCKRGKHWANECKS). The segment at 592-626 (KSKTDNQGNPIPPHQGNRVEGPAPGPETSLWGSQL) is disordered. Positions 780-856 (FTGLIDTGAD…LPVNLWGRDL (77 aa)) constitute a Peptidase A2 domain. Asp785 (protease; shared with dimeric partner) is an active-site residue. Residues 867–911 (PNDIVTAQMLAQGYSPGKGLGKKENGILHPIPNQGQSNKKGFGNF) form the G-patch domain.

As to quaternary structure, homodimer. In terms of assembly, interacts with the reverse transcriptase/ribonuclease H. Homotrimer. In terms of processing, released by autocatalytic processing. The protease can undergo further autoprocessing to yield 2 shorter but enzymatically active forms of 12 kDa and 13 kDa without the GDP domain. the 12 kDa form is monomeric. Myristoylated. Myristoylation of the matrix (MA) domain mediates the transport and binding of Gag polyproteins to the host plasma membrane and is required for the assembly of viral particles. Post-translationally, specific enzymatic cleavages in vivo yield mature proteins.

The protein localises to the virion. It carries out the reaction dUTP + H2O = dUMP + diphosphate + H(+). Matrix protein. Its function is as follows. Nucleocapsid protein p14: Nucleocapsid protein. Functionally, capsid protein. In terms of biological role, the aspartyl protease mediates proteolytic cleavages of Gag and Gag-Pol polyproteins during or shortly after the release of the virion from the plasma membrane. Cleavages take place as an ordered, step-wise cascade to yield mature proteins. This process is called maturation. Displays maximal activity during the budding process just prior to particle release from the cell. Enhances the activity of the reverse transcriptase. May be part of the mature RT. The chain is Gag-Pro polyprotein (gag-pro) from Mason-Pfizer monkey virus (MPMV).